The primary structure comprises 350 residues: uncharacterized protein (350 aa).

The segment covering 197-212 (KNDNSEDNRSEDDLKS) has biased composition (basic and acidic residues). The interval 197 to 217 (KNDNSEDNRSEDDLKSSQDPV) is disordered.

It is found in the plastid. It localises to the chloroplast. This is an uncharacterized protein from Euglena gracilis.